We begin with the raw amino-acid sequence, 216 residues long: MAAGPRNSMLLVFALLSLPWPQEVGAFPAMPLSSLFANAVLRAQHLHQLAADTYKDFERAYIPEGQRYSIQNAQAAFCFSETIPAPTGKDEAQQRSDMELLRFSLLLIQSWLGPVQFLSRVFTNSLVFGTSDRVYEKLKDLEEGIQALMRELEDGSPRAGPILKQTYDKFDTNLRSDDALLKNYGLLSCFKKDLHKAETYLRVMKCRRFVESSCAF.

Residues 1-26 (MAAGPRNSMLLVFALLSLPWPQEVGA) form the signal peptide. Residue His-45 coordinates Zn(2+). An intrachain disulfide couples Cys-78 to Cys-189. Ser-131 carries the post-translational modification Phosphoserine. Glu-198 provides a ligand contact to Zn(2+). Cys-206 and Cys-214 are oxidised to a cystine.

This sequence belongs to the somatotropin/prolactin family.

It localises to the secreted. In terms of biological role, plays an important role in growth control. Its major role in stimulating body growth is to stimulate the liver and other tissues to secrete IGF1. It stimulates both the differentiation and proliferation of myoblasts. It also stimulates amino acid uptake and protein synthesis in muscle and other tissues. The sequence is that of Somatotropin (GH1) from Neovison vison (American mink).